The primary structure comprises 260 residues: Triosephosphate isomerase (260 aa).

Substrate is bound at residue 10–12 (NWK). Catalysis depends on His100, which acts as the Electrophile. Glu172 (proton acceptor) is an active-site residue. Substrate-binding positions include Gly178, Ser218, and 239–240 (GG).

The protein belongs to the triosephosphate isomerase family. In terms of assembly, homodimer.

The protein resides in the cytoplasm. It catalyses the reaction D-glyceraldehyde 3-phosphate = dihydroxyacetone phosphate. It participates in carbohydrate biosynthesis; gluconeogenesis. It functions in the pathway carbohydrate degradation; glycolysis; D-glyceraldehyde 3-phosphate from glycerone phosphate: step 1/1. In terms of biological role, involved in the gluconeogenesis. Catalyzes stereospecifically the conversion of dihydroxyacetone phosphate (DHAP) to D-glyceraldehyde-3-phosphate (G3P). This Corynebacterium diphtheriae (strain ATCC 700971 / NCTC 13129 / Biotype gravis) protein is Triosephosphate isomerase.